The primary structure comprises 181 residues: ADP-ribosylation factor 1 (181 aa).

G2 is lipidated: N-myristoyl glycine. Positions 3–16 are important for the stable binding to the membranes; the sequence is NMFANLFKGLFGKK. Residues 24–32, 126–129, and A160 each bind GTP; these read GLDAAGKTT and NKQD.

It belongs to the small GTPase superfamily. Arf family.

Its subcellular location is the golgi apparatus membrane. The catalysed reaction is GTP + H2O = GDP + phosphate + H(+). Alternates between an inactive GDP-bound form and an active GTP-bound form. Activated by a guanine nucleotide-exchange factor (GEF) and inactivated by GTPase-activating protein (GAP). Functionally, small GTPase involved in protein trafficking between different compartments. Modulates vesicle budding and uncoating within the Golgi complex. In its GTP-bound form, triggers the recruitment of coatomer proteins to the Golgi membrane. The hydrolysis of ARF1-bound GTP, which is mediated by ARFGAPs proteins, is required for dissociation of coat proteins from Golgi membranes and vesicles. This chain is ADP-ribosylation factor 1 (arf1), found in Xenopus laevis (African clawed frog).